Here is a 459-residue protein sequence, read N- to C-terminus: O-phospho-L-seryl-tRNA:Cys-tRNA synthase 1 (459 aa).

Pyridoxal 5'-phosphate contacts are provided by residues 152 to 153 (AR), Asn-257, and 280 to 282 (SGH). Lys-283 is modified (N6-(pyridoxal phosphate)lysine).

It belongs to the SepCysS family. Homodimer. Interacts with SepRS. It depends on pyridoxal 5'-phosphate as a cofactor.

The enzyme catalyses O-phospho-L-seryl-tRNA(Cys) + hydrogen sulfide + H(+) = L-cysteinyl-tRNA(Cys) + phosphate. Its function is as follows. Converts O-phospho-L-seryl-tRNA(Cys) (Sep-tRNA(Cys)) to L-cysteinyl-tRNA(Cys) (Cys-tRNA(Cys)). The polypeptide is O-phospho-L-seryl-tRNA:Cys-tRNA synthase 1 (Methanococcoides burtonii (strain DSM 6242 / NBRC 107633 / OCM 468 / ACE-M)).